We begin with the raw amino-acid sequence, 445 residues long: Glutamate--tRNA ligase 1 (445 aa).

The 'HIGH' region motif lies at 9–19 (PSPTGYLHVGN). A 'KMSKS' region motif is present at residues 238-242 (KISKR). Lysine 241 contributes to the ATP binding site.

Belongs to the class-I aminoacyl-tRNA synthetase family. Glutamate--tRNA ligase type 1 subfamily. Monomer.

The protein resides in the cytoplasm. It catalyses the reaction tRNA(Glu) + L-glutamate + ATP = L-glutamyl-tRNA(Glu) + AMP + diphosphate. Catalyzes the attachment of glutamate to tRNA(Glu) in a two-step reaction: glutamate is first activated by ATP to form Glu-AMP and then transferred to the acceptor end of tRNA(Glu). The protein is Glutamate--tRNA ligase 1 of Ehrlichia ruminantium (strain Gardel).